Reading from the N-terminus, the 584-residue chain is MNNHIEALSYYLGAFVDELTRLNVCDVVISPGSRSTPIALLMEQHEGMNTYLHVDERSAGFFALGIAKAKKRPVALLCTSGTAAANYYPAVCEAFHSRVPLIVLTADRPHELRDVGAPQAMNQFNLYGTFVKQFTEMALPEASEAMYHYARMTTQRMIASACLAPQGPVHLNFPVREPLIPDFSLESLWDKGRGEYTGVVQQGNVVMPSEYVDSLVGRLSHMEKGLIICGDDSHSEIAAFATQLAEKTGYPILADPLSNIRSGHHDKTMVIDCYDTFLRNELLKETWKPDVLIRFGGMPVSKALTQFIKKQTKAVHIVVDESGQWRDPALVATEVVQASDIAFCSALIEKMPVMKKNDWFRMWQHINEKTKETLREMETYDTAFEGRVITDIVRVLPEGATLFASNSMPIRDTDSFFFTSDKNIQVMANRGVNGIDGIISTALGASIICDPLVLVIGDLSFYHDLNGLLAAKLHELNITIVVVNNDGGGIFSFLPQYEKKEHFESLFGTPIGLDYEHVVTMYGGSFSRVNGWEQFREEVQKGATTEGLHVVEICTNRDENLTLHRTLWAKTQDVITTSLQGESK.

It belongs to the TPP enzyme family. MenD subfamily. In terms of assembly, homodimer. Mg(2+) is required as a cofactor. Mn(2+) serves as cofactor. Requires thiamine diphosphate as cofactor.

It catalyses the reaction isochorismate + 2-oxoglutarate + H(+) = 5-enolpyruvoyl-6-hydroxy-2-succinyl-cyclohex-3-ene-1-carboxylate + CO2. It participates in quinol/quinone metabolism; 1,4-dihydroxy-2-naphthoate biosynthesis; 1,4-dihydroxy-2-naphthoate from chorismate: step 2/7. The protein operates within quinol/quinone metabolism; menaquinone biosynthesis. Functionally, catalyzes the thiamine diphosphate-dependent decarboxylation of 2-oxoglutarate and the subsequent addition of the resulting succinic semialdehyde-thiamine pyrophosphate anion to isochorismate to yield 2-succinyl-5-enolpyruvyl-6-hydroxy-3-cyclohexene-1-carboxylate (SEPHCHC). The protein is 2-succinyl-5-enolpyruvyl-6-hydroxy-3-cyclohexene-1-carboxylate synthase of Bacillus cereus (strain ZK / E33L).